The primary structure comprises 853 residues: DNA mismatch repair protein MutS (853 aa).

613 to 620 (GPNMGGKS) contributes to the ATP binding site.

This sequence belongs to the DNA mismatch repair MutS family.

Functionally, this protein is involved in the repair of mismatches in DNA. It is possible that it carries out the mismatch recognition step. This protein has a weak ATPase activity. This chain is DNA mismatch repair protein MutS, found in Vibrio vulnificus (strain YJ016).